An 852-amino-acid polypeptide reads, in one-letter code: DNA repair protein rhp54 (852 aa).

2 consecutive short sequence motifs (nuclear localization signal) follow at residues 35-51 and 178-181; these read KKFK…RKEL and KRKK. Positions 187-205 are enriched in basic and acidic residues; that stretch reads NRKGKKEISDSEPESDHDS. Residues 187-208 form a disordered region; the sequence is NRKGKKEISDSEPESDHDSCVS. In terms of domain architecture, Helicase ATP-binding spans 281 to 459; it reads GRIDRCANGC…FSLLNFANPG (179 aa). Residue 294 to 301 participates in ATP binding; sequence DEMGLGKT. The DEGH box motif lies at 410 to 413; that stretch reads DEGH. Residues 614–767 form the Helicase C-terminal domain; the sequence is VLERMLYQIK…CVVDEAQDVE (154 aa).

Belongs to the SNF2/RAD54 helicase family. As to quaternary structure, homohexamer. Interacts with rhp51.

The protein localises to the nucleus. It catalyses the reaction ATP + H2O = ADP + phosphate + H(+). Plays an essential role in homologous recombination (HR) which is a major pathway for repairing DNA double-strand breaks (DSBs), single-stranded DNA (ssDNA) gaps, and stalled or collapsed replication forks. Acts as a molecular motor during the homology search and guides RAD51 ssDNA along a donor dsDNA thereby changing the homology search from the diffusion-based mechanism to a motor-guided mechanism. Plays also an essential role in RAD51-mediated synaptic complex formation which consists of three strands encased in a protein filament formed once homology is recognized. Once DNA strand exchange occured, dissociates RAD51 from nucleoprotein filaments formed on dsDNA. This chain is DNA repair protein rhp54 (rhp54), found in Schizosaccharomyces pombe (strain 972 / ATCC 24843) (Fission yeast).